A 134-amino-acid chain; its full sequence is Ribosome-binding factor A (134 aa).

This sequence belongs to the RbfA family. In terms of assembly, monomer. Binds 30S ribosomal subunits, but not 50S ribosomal subunits or 70S ribosomes.

It is found in the cytoplasm. One of several proteins that assist in the late maturation steps of the functional core of the 30S ribosomal subunit. Associates with free 30S ribosomal subunits (but not with 30S subunits that are part of 70S ribosomes or polysomes). Required for efficient processing of 16S rRNA. May interact with the 5'-terminal helix region of 16S rRNA. This Synechococcus sp. (strain CC9311) protein is Ribosome-binding factor A.